The following is a 306-amino-acid chain: N-acetylmuramic acid 6-phosphate etherase (306 aa).

One can recognise an SIS domain in the interval 59–222 (ISEALRQGGR…STGAMVQLGK (164 aa)). E87 functions as the Proton donor in the catalytic mechanism. The active site involves E118.

Belongs to the GCKR-like family. MurNAc-6-P etherase subfamily. As to quaternary structure, homodimer.

It carries out the reaction N-acetyl-D-muramate 6-phosphate + H2O = N-acetyl-D-glucosamine 6-phosphate + (R)-lactate. Its pathway is amino-sugar metabolism; N-acetylmuramate degradation. Its function is as follows. Specifically catalyzes the cleavage of the D-lactyl ether substituent of MurNAc 6-phosphate, producing GlcNAc 6-phosphate and D-lactate. The protein is N-acetylmuramic acid 6-phosphate etherase of Gloeothece citriformis (strain PCC 7424) (Cyanothece sp. (strain PCC 7424)).